Here is a 345-residue protein sequence, read N- to C-terminus: N-malonyltransferase FDB2 (345 aa).

Cysteine 110 (acyl-thioester intermediate) is an active-site residue. Histidine 158 (proton acceptor) is an active-site residue. Aspartate 173 is an active-site residue.

It belongs to the arylamine N-acetyltransferase family.

It participates in xenobiotic degradation. In terms of biological role, N-malonyltransferase; part of the Fusarium detoxification of benzoxazolinone cluster 2 (FDB2) involved in the degradation of benzoxazolinones produced by the host plant. Maize, wheat, and rye produce the 2 benzoxazinone phytoanticipins 2,4-dihy-droxy-7-methoxy-1,4-benzoxazin-3-one (DIMBOA) and 2,4-dihydroxy-1,4-benzoxazin-3-one (DIBOA) that, due to their inherent instability once released, spontaneously degrade to the more stable corresponding benzoxazolinones, 6-methoxy-2-benzoxazolinone (MBOA) and 2-benzoxazolinone (BOA), respectively. The first step in the detoxification of benzoxazolinones involves the hydrolysis of the cyclic ester bond of benzoxazolinones by the FDB1 cluster gamma-lactamase MBL1 to aminophenols. MBL1 is able to convert BOA into 2-aminophenol (2-AP), as well as MBOA into 5-methoxy-2-aminophenol (2-AMP). The FDB2 cluster N-malonyltransferase FDB2/NAT1 then metabolizes aminophenols via N-malonylation to non-toxic malonamic acids. FDB2/NAT1 converts 2-AP into N-(2-hydroxyphenyl) malonamic acid (HPMA) and 2-AMP into N-(2-hydroxy-4-methoxyphenyl) malonamic acid (HMPMA). The duplicated dienlactone hydrolases DLH1 and DLH2 may provide redundant function for hydrolyzing the lactone moiety in the BOA molecule. The roles of the amidases an other enzymes encoded by the 2 FDB clusters have not been identified so far. The chain is N-malonyltransferase FDB2 from Gibberella moniliformis (strain M3125 / FGSC 7600) (Maize ear and stalk rot fungus).